The chain runs to 374 residues: Outer membrane protein assembly factor BamC (374 aa).

Residues 1–22 form the signal peptide; sequence MSKFYKSGRVTTAVIVALSLSA. Cys-23 is lipidated: N-palmitoyl cysteine. Cys-23 is lipidated: S-diacylglycerol cysteine.

The protein belongs to the BamC family. In terms of assembly, part of the Bam complex.

The protein localises to the cell outer membrane. Its function is as follows. Part of the outer membrane protein assembly complex, which is involved in assembly and insertion of beta-barrel proteins into the outer membrane. The chain is Outer membrane protein assembly factor BamC from Psychromonas ingrahamii (strain DSM 17664 / CCUG 51855 / 37).